A 1166-amino-acid polypeptide reads, in one-letter code: Serine/threonine-protein kinase BRI1-like 1 (1166 aa).

The signal sequence occupies residues methionine 1–glycine 21. Over isoleucine 22–threonine 776 the chain is Extracellular. Residue asparagine 33 is glycosylated (N-linked (GlcNAc...) asparagine). The Cys pair 1 signature appears at cysteine 66 to cysteine 73. LRR repeat units lie at residues arginine 78–threonine 99, asparagine 103–aspartate 124, tyrosine 126–phenylalanine 147, asparagine 152–serine 173, serine 176–serine 197, serine 202–isoleucine 224, asparagine 227–proline 248, phenylalanine 252–glycine 274, asparagine 278–leucine 300, threonine 303–cysteine 325, tryptophan 327–lysine 349, glycine 352–serine 375, asparagine 376–serine 397, valine 403–lysine 424, serine 427–leucine 449, asparagine 451–lysine 473, asparagine 476–cysteine 498, asparagine 500–leucine 522, lysine 524–lysine 547, and serine 548–glutamine 570. A glycan (N-linked (GlcNAc...) asparagine) is linked at asparagine 97. Asparagine 157 is a glycosylation site (N-linked (GlcNAc...) asparagine). 4 N-linked (GlcNAc...) asparagine glycosylation sites follow: asparagine 212, asparagine 227, asparagine 237, and asparagine 257. 2 N-linked (GlcNAc...) asparagine glycosylation sites follow: asparagine 362 and asparagine 373. 2 N-linked (GlcNAc...) asparagine glycosylation sites follow: asparagine 451 and asparagine 461. N-linked (GlcNAc...) asparagine glycosylation is found at asparagine 521, asparagine 532, asparagine 558, and asparagine 638. LRR repeat units lie at residues tyrosine 664 to leucine 686, alanine 688 to leucine 710, and phenylalanine 712 to threonine 734. Asparagine 722 and asparagine 743 each carry an N-linked (GlcNAc...) asparagine glycan. Positions cysteine 748–cysteine 755 match the Cys pair 2 motif. A helical transmembrane segment spans residues alanine 777–tyrosine 797. The Cytoplasmic segment spans residues arginine 798 to proline 1166. 2 positions are modified to phosphothreonine: threonine 848 and threonine 856. Residues phenylalanine 859–leucine 1147 enclose the Protein kinase domain. ATP-binding positions include valine 865–valine 873 and lysine 887. Position 932 is a phosphotyrosine (tyrosine 932). Aspartate 987 serves as the catalytic Proton acceptor. A Phosphoserine modification is found at serine 1022. A Phosphotyrosine modification is found at tyrosine 1030. At threonine 1141 the chain carries Phosphothreonine. Positions glutamate 1142–proline 1166 are disordered.

It belongs to the protein kinase superfamily. Ser/Thr protein kinase family. Predominantly expressed in vascular tissues. From 7 day old seedlings, it is expressed in the columella cells of the root tip, in the vascular initials in the meristematic region of the root and in vascular tissues. After germination, it is expressed in the stele cell and in the early differentiation zone of the root, where the expression continues from the root to the hypocotyls and cotyledons following the midvein. In mature plants, it is expressed in the vasculature of the leaf, predominantly in the midvein, and in the vascular bundles of inflorescence stems. Localizes to procambial cells of the vascular bundles located between the differentiating xylem and the phloem.

The protein resides in the cell membrane. It catalyses the reaction L-seryl-[protein] + ATP = O-phospho-L-seryl-[protein] + ADP + H(+). It carries out the reaction L-threonyl-[protein] + ATP = O-phospho-L-threonyl-[protein] + ADP + H(+). Functionally, receptor with a serine/threonine-protein kinase activity. Regulates, in response to brassinosteroid binding, a signaling cascade involved in plant development. Binds brassinolide. May be involved in cell growth and vascular differentiation. This is Serine/threonine-protein kinase BRI1-like 1 (BRL1) from Arabidopsis thaliana (Mouse-ear cress).